A 457-amino-acid chain; its full sequence is Bifunctional protein GlmU (457 aa).

Positions 1-230 are pyrophosphorylase; it reads MSKRYAVVLA…FEESLGVNDR (230 aa). Residues 9–12, Lys23, Gln73, and 78–79 contribute to the UDP-N-acetyl-alpha-D-glucosamine site; these read LAAG and GT. Asp103 contacts Mg(2+). Positions 140, 155, 170, and 228 each coordinate UDP-N-acetyl-alpha-D-glucosamine. Asn228 contributes to the Mg(2+) binding site. The tract at residues 231–251 is linker; the sequence is IALAEASKLMQRRINDNHMRN. The interval 252-457 is N-acetyltransferase; that stretch reads GVTLVNPENT…DYAKRLNHGK (206 aa). Residues Arg333 and Lys351 each contribute to the UDP-N-acetyl-alpha-D-glucosamine site. The active-site Proton acceptor is His363. Tyr366 and Asn377 together coordinate UDP-N-acetyl-alpha-D-glucosamine. Acetyl-CoA contacts are provided by residues 386–387, Ala423, and Arg440; that span reads NY.

In the N-terminal section; belongs to the N-acetylglucosamine-1-phosphate uridyltransferase family. The protein in the C-terminal section; belongs to the transferase hexapeptide repeat family. In terms of assembly, homotrimer. Mg(2+) is required as a cofactor.

The protein resides in the cytoplasm. It catalyses the reaction alpha-D-glucosamine 1-phosphate + acetyl-CoA = N-acetyl-alpha-D-glucosamine 1-phosphate + CoA + H(+). The catalysed reaction is N-acetyl-alpha-D-glucosamine 1-phosphate + UTP + H(+) = UDP-N-acetyl-alpha-D-glucosamine + diphosphate. It functions in the pathway nucleotide-sugar biosynthesis; UDP-N-acetyl-alpha-D-glucosamine biosynthesis; N-acetyl-alpha-D-glucosamine 1-phosphate from alpha-D-glucosamine 6-phosphate (route II): step 2/2. The protein operates within nucleotide-sugar biosynthesis; UDP-N-acetyl-alpha-D-glucosamine biosynthesis; UDP-N-acetyl-alpha-D-glucosamine from N-acetyl-alpha-D-glucosamine 1-phosphate: step 1/1. It participates in bacterial outer membrane biogenesis; LPS lipid A biosynthesis. Catalyzes the last two sequential reactions in the de novo biosynthetic pathway for UDP-N-acetylglucosamine (UDP-GlcNAc). The C-terminal domain catalyzes the transfer of acetyl group from acetyl coenzyme A to glucosamine-1-phosphate (GlcN-1-P) to produce N-acetylglucosamine-1-phosphate (GlcNAc-1-P), which is converted into UDP-GlcNAc by the transfer of uridine 5-monophosphate (from uridine 5-triphosphate), a reaction catalyzed by the N-terminal domain. The chain is Bifunctional protein GlmU from Listeria welshimeri serovar 6b (strain ATCC 35897 / DSM 20650 / CCUG 15529 / CIP 8149 / NCTC 11857 / SLCC 5334 / V8).